A 283-amino-acid polypeptide reads, in one-letter code: NAD kinase (283 aa).

The Proton acceptor role is filled by aspartate 61. Residues 61–62 (DG), 134–135 (ND), arginine 145, aspartate 164, 175–180 (TAYNLS), and glutamine 234 each bind NAD(+).

The protein belongs to the NAD kinase family. It depends on a divalent metal cation as a cofactor.

The protein resides in the cytoplasm. It catalyses the reaction NAD(+) + ATP = ADP + NADP(+) + H(+). Functionally, involved in the regulation of the intracellular balance of NAD and NADP, and is a key enzyme in the biosynthesis of NADP. Catalyzes specifically the phosphorylation on 2'-hydroxyl of the adenosine moiety of NAD to yield NADP. This chain is NAD kinase, found in Clostridium kluyveri (strain NBRC 12016).